A 310-amino-acid chain; its full sequence is Putative S-adenosyl-L-methionine-dependent methyltransferase MMAR_3534 (310 aa).

Residues D131 and 160-161 each bind S-adenosyl-L-methionine; that span reads DL.

It belongs to the UPF0677 family.

Exhibits S-adenosyl-L-methionine-dependent methyltransferase activity. This Mycobacterium marinum (strain ATCC BAA-535 / M) protein is Putative S-adenosyl-L-methionine-dependent methyltransferase MMAR_3534.